The primary structure comprises 239 residues: MQPHLDNNSNNDDVKLDTLGEQNVLSSAENITLPEDTFKSYMTYLLYEMAHYKPMIFSFLALSVSILIVVIFHNVKACDVVFGFSIFVTSILFLSTLIPFNVYISDEGFRIKLLLEVITHRPAVKGKEWRAITDNMNQYLLDNGLWSTRYYFYSSERCYKFFRFLVKEKPPGVNVNSSVKDATSTQIDAPANEASNEVIKCFSFSSDPIFEAYFVKAVEVEKQAQQEYWRKQYPDADIP.

Residues 1 to 54 (MQPHLDNNSNNDDVKLDTLGEQNVLSSAENITLPEDTFKSYMTYLLYEMAHYKP) are Cytoplasmic-facing. A helical transmembrane segment spans residues 55–75 (MIFSFLALSVSILIVVIFHNV). Residues 76–79 (KACD) lie on the Extracellular side of the membrane. The helical transmembrane segment at 80 to 104 (VVFGFSIFVTSILFLSTLIPFNVYI) threads the bilayer. The Cytoplasmic portion of the chain corresponds to 105 to 239 (SDEGFRIKLL…RKQYPDADIP (135 aa)).

It belongs to the DUP/COS family. As to quaternary structure, interacts according to large scale protein interaction studies with MEC3 and ULP1.

Its subcellular location is the membrane. This Saccharomyces cerevisiae (strain ATCC 204508 / S288c) (Baker's yeast) protein is DUP240 protein DFP3.